A 132-amino-acid chain; its full sequence is Seminal vesicle protein SVP-2 (132 aa).

The signal sequence occupies residues 1–14; sequence HLALLLILENQASG. Basic and acidic residues predominate over residues 33–81; the sequence is HKEEVEESESSRGQDFDKRRFWEKDDPTGEHVSVRHEHLEKSHIRFKED. 2 disordered regions span residues 33 to 104 and 113 to 132; these read HKEE…LKRH and VEDQ…MQRV. Positions 104-132 are excised as a propeptide; sequence HDAMEELVSVEDQALANGADPGKSNMQRV.

The protein to the SVP-1/-3/-4 precursor, particularly in regions where protein processing must occur.

It is found in the secreted. The protein is Seminal vesicle protein SVP-2 of Cavia porcellus (Guinea pig).